A 772-amino-acid polypeptide reads, in one-letter code: Protein U58 (772 aa).

The protein belongs to the herpesviridae UL87 family.

The polypeptide is Protein U58 (U58) (Homo sapiens (Human)).